Here is a 233-residue protein sequence, read N- to C-terminus: Superoxide dismutase [Mn], mitochondrial (233 aa).

A mitochondrion-targeting transit peptide spans 1-26 (MFAKTAAANLTKKGGLSLLSTTARRT). Positions 52 and 107 each coordinate Mn(2+). Phosphothreonine is present on residues Thr-147 and Thr-149. The Mn(2+) site is built by Asp-194 and His-198.

This sequence belongs to the iron/manganese superoxide dismutase family. Homotetramer. Mn(2+) is required as a cofactor.

Its subcellular location is the mitochondrion matrix. The catalysed reaction is 2 superoxide + 2 H(+) = H2O2 + O2. Destroys superoxide anion radicals which are normally produced within the cells and which are toxic to biological systems. This is Superoxide dismutase [Mn], mitochondrial (SOD2) from Saccharomyces cerevisiae (strain ATCC 204508 / S288c) (Baker's yeast).